Reading from the N-terminus, the 239-residue chain is tRNA (guanine-N(1)-)-methyltransferase (239 aa).

Residues glycine 113 and 137 to 142 each bind S-adenosyl-L-methionine; that span reads LGDYVL.

Belongs to the RNA methyltransferase TrmD family. Homodimer.

Its subcellular location is the cytoplasm. The catalysed reaction is guanosine(37) in tRNA + S-adenosyl-L-methionine = N(1)-methylguanosine(37) in tRNA + S-adenosyl-L-homocysteine + H(+). In terms of biological role, specifically methylates guanosine-37 in various tRNAs. This chain is tRNA (guanine-N(1)-)-methyltransferase, found in Cutibacterium acnes (strain DSM 16379 / KPA171202) (Propionibacterium acnes).